Here is a 364-residue protein sequence, read N- to C-terminus: Growth hormone secretagogue receptor type 1 (364 aa).

Over 1 to 40 (MWNATPSEEPEPNVTLDLDWDASPGNDSLPDELLPLFPAP) the chain is Extracellular. N-linked (GlcNAc...) asparagine glycans are attached at residues Asn13 and Asn26. A helical transmembrane segment spans residues 41–66 (LLAGVTATCVALFVVGISGNLLTMLV). At 67–72 (VSRFRE) the chain is on the cytoplasmic side. A helical membrane pass occupies residues 73–96 (LRTTTNLYLSSMAFSDLLIFLCMP). The Extracellular segment spans residues 97-117 (LDLVRLWQYRPWNFGDLLCKL). Cys115 and Cys197 are disulfide-bonded. The helical transmembrane segment at 118-139 (FQFVSESCTYATVLTITALSVE) threads the bilayer. At 140 to 162 (RYFAICFPLRAKVVVTKGRVKLV) the chain is on the cytoplasmic side. Residues 163–183 (ILVIWAVAFCSAGPIFVLVGV) traverse the membrane as a helical segment. Residues 184–211 (EHENGTDPRDTNECRATEFAVRSGLLTV) lie on the Extracellular side of the membrane. A glycan (N-linked (GlcNAc...) asparagine) is linked at Asn187. Residues 212–235 (MVWVSSVFFFLPVFCLTVLYSLIG) form a helical membrane-spanning segment. At 236 to 263 (RKLWRRRGDAAVGASLRDQNHKQTVKML) the chain is on the cytoplasmic side. A helical membrane pass occupies residues 264 to 285 (AVVVFAFILCWLPFHVGRYLFS). The Extracellular segment spans residues 286–302 (KSFEPGSLEIAQISQYC). A helical transmembrane segment spans residues 303 to 326 (NLVSFVLFYLSAAINPILYNIMSK). The Cytoplasmic segment spans residues 327 to 364 (KYRVAVFKLLGFESFSQRKLSTLKDESSRAWTKSSINT).

Belongs to the G-protein coupled receptor 1 family.

The protein resides in the cell membrane. In terms of biological role, receptor for ghrelin, coupled to G-alpha-11 proteins. Stimulates growth hormone secretion. Also binds other growth hormone releasing peptides (GHRP) (e.g. Met-enkephalin and GHRP-6) as well as non-peptide, low molecular weight secretagogues (e.g. L-692,429, MK-0677, adenosine). The sequence is that of Growth hormone secretagogue receptor type 1 (Ghsr) from Rattus norvegicus (Rat).